The chain runs to 415 residues: Peptide chain release factor subunit 1 (415 aa).

The protein belongs to the eukaryotic release factor 1 family. In terms of assembly, heterodimer of two subunits, one of which binds GTP.

The protein localises to the cytoplasm. Functionally, directs the termination of nascent peptide synthesis (translation) in response to the termination codons UAA, UAG and UGA. The sequence is that of Peptide chain release factor subunit 1 from Thermococcus onnurineus (strain NA1).